Reading from the N-terminus, the 228-residue chain is Cytidylate kinase (228 aa).

ATP is bound at residue 10-18 (GPSGSGKGT).

It belongs to the cytidylate kinase family. Type 1 subfamily.

The protein localises to the cytoplasm. The catalysed reaction is CMP + ATP = CDP + ADP. The enzyme catalyses dCMP + ATP = dCDP + ADP. This Acinetobacter baumannii (strain AB0057) protein is Cytidylate kinase.